The primary structure comprises 251 residues: Coproheme decarboxylase (251 aa).

Residues Arg133, 147–151 (YPMSK), His174, Gln187, and Ser225 each bind Fe-coproporphyrin III. The active site involves Tyr147.

The protein belongs to the ChdC family. Type 1 subfamily. Fe-coproporphyrin III serves as cofactor.

It carries out the reaction Fe-coproporphyrin III + 2 H2O2 + 2 H(+) = heme b + 2 CO2 + 4 H2O. The enzyme catalyses Fe-coproporphyrin III + H2O2 + H(+) = harderoheme III + CO2 + 2 H2O. It catalyses the reaction harderoheme III + H2O2 + H(+) = heme b + CO2 + 2 H2O. It functions in the pathway porphyrin-containing compound metabolism; protoheme biosynthesis. Its function is as follows. Involved in coproporphyrin-dependent heme b biosynthesis. Catalyzes the decarboxylation of Fe-coproporphyrin III (coproheme) to heme b (protoheme IX), the last step of the pathway. The reaction occurs in a stepwise manner with a three-propionate intermediate. The sequence is that of Coproheme decarboxylase from Listeria welshimeri serovar 6b (strain ATCC 35897 / DSM 20650 / CCUG 15529 / CIP 8149 / NCTC 11857 / SLCC 5334 / V8).